We begin with the raw amino-acid sequence, 142 residues long: Hemoglobin subunit alpha (142 aa).

The Globin domain maps to 2 to 142; that stretch reads VLSPADKTNV…VSTVLTSKYR (141 aa). Serine 4 bears the Phosphoserine mark. The residue at position 8 (lysine 8) is an N6-succinyllysine. Position 9 is a phosphothreonine (threonine 9). An N6-succinyllysine modification is found at lysine 12. The residue at position 17 (lysine 17) is an N6-acetyllysine; alternate. Position 17 is an N6-succinyllysine; alternate (lysine 17). At tyrosine 25 the chain carries Phosphotyrosine. Serine 36 is subject to Phosphoserine. Lysine 41 bears the N6-succinyllysine mark. The residue at position 50 (serine 50) is a Phosphoserine. Position 59 (histidine 59) interacts with O2. Histidine 88 contributes to the heme b binding site. Serine 103 carries the phosphoserine modification. Threonine 109 bears the Phosphothreonine mark. Phosphoserine is present on residues serine 125 and serine 132. Phosphothreonine is present on residues threonine 135 and threonine 138. At serine 139 the chain carries Phosphoserine.

This sequence belongs to the globin family. In terms of assembly, heterotetramer of two alpha chains and two beta chains. Red blood cells.

Its function is as follows. Involved in oxygen transport from the lung to the various peripheral tissues. Hemopressin acts as an antagonist peptide of the cannabinoid receptor CNR1. Hemopressin-binding efficiently blocks cannabinoid receptor CNR1 and subsequent signaling. In Sapajus apella (Brown-capped capuchin), this protein is Hemoglobin subunit alpha (HBA).